The chain runs to 408 residues: Serine/threonine-protein kinase ATG1t (408 aa).

The Protein kinase domain occupies 7–272 (YIAKSKLSES…GRIKNSRVWV (266 aa)). ATP contacts are provided by residues 13–21 (LSESLTSTV) and Lys-36. The Proton acceptor role is filled by Asp-129.

It belongs to the protein kinase superfamily. Ser/Thr protein kinase family.

It is found in the cytoplasmic vesicle. Its subcellular location is the autophagosome. Functionally, serine/threonine protein kinase involved in autophagy. The ATG1-ATG13 protein kinase complex regulates downstream events required for autophagosome enclosure and/or vacuolar delivery. This is Serine/threonine-protein kinase ATG1t from Arabidopsis thaliana (Mouse-ear cress).